A 93-amino-acid chain; its full sequence is Small ribosomal subunit protein uS19 (93 aa).

The protein belongs to the universal ribosomal protein uS19 family.

In terms of biological role, protein S19 forms a complex with S13 that binds strongly to the 16S ribosomal RNA. This is Small ribosomal subunit protein uS19 from Campylobacter concisus (strain 13826).